The primary structure comprises 360 residues: Protein phosphatase 1L (360 aa).

Residues 1 to 25 lie on the Extracellular side of the membrane; the sequence is MIEDTMTLLSLLGRIMRYFLLRPET. A helical membrane pass occupies residues 26–42; the sequence is LFLLCISLALWSYFFHT. Over 43–360 the chain is Cytoplasmic; it reads DEVKTIVKSS…FRNSSKTEEH (318 aa). A PPM-type phosphatase domain is found at 92–351; it reads NVAVYSIQGR…DNITVMVVKF (260 aa). Positions 128, 129, 302, and 342 each coordinate Mn(2+).

Belongs to the PP2C family. In terms of assembly, interacts with MAP3K7/TAK1 and MAP3K5. The cofactor is Mg(2+). Requires Mn(2+) as cofactor. Expressed in brain, heart, testis, liver, lung and skeletal muscle.

The protein localises to the membrane. The enzyme catalyses O-phospho-L-seryl-[protein] + H2O = L-seryl-[protein] + phosphate. It catalyses the reaction O-phospho-L-threonyl-[protein] + H2O = L-threonyl-[protein] + phosphate. Its function is as follows. Acts as a suppressor of the SAPK signaling pathways by associating with and dephosphorylating MAP3K7/TAK1 and MAP3K5, and by attenuating the association between MAP3K7/TAK1 and MAP2K4 or MAP2K6. The protein is Protein phosphatase 1L (Ppm1l) of Mus musculus (Mouse).